A 555-amino-acid chain; its full sequence is Beta-hexosaminidase A (555 aa).

Positions 1–18 (MRLLIPILIFALITTAVT) are cleaved as a signal peptide. N-linked (GlcNAc...) asparagine glycosylation occurs at Asn47. The active-site Proton donor is the Glu325. Residues Asn351, Asn412, and Asn460 are each glycosylated (N-linked (GlcNAc...) asparagine).

This sequence belongs to the glycosyl hydrolase 20 family. As to expression, expressed in coelomocytes and neurons of the pharyngeal region and nerve cord.

It localises to the lysosome. The catalysed reaction is Hydrolysis of terminal non-reducing N-acetyl-D-hexosamine residues in N-acetyl-beta-D-hexosaminides.. In terms of biological role, responsible for the degradation of GM2 gangliosides, and a variety of other molecules containing terminal N-acetyl hexosamines. Degrades chitotriose. The protein is Beta-hexosaminidase A (hex-1) of Caenorhabditis elegans.